The primary structure comprises 416 residues: UDP-N-acetylmuramoylalanine--D-glutamate ligase (416 aa).

Residue 108-114 (GTVGKTT) participates in ATP binding.

The protein belongs to the MurCDEF family.

It is found in the cytoplasm. The enzyme catalyses UDP-N-acetyl-alpha-D-muramoyl-L-alanine + D-glutamate + ATP = UDP-N-acetyl-alpha-D-muramoyl-L-alanyl-D-glutamate + ADP + phosphate + H(+). It participates in cell wall biogenesis; peptidoglycan biosynthesis. Functionally, cell wall formation. Catalyzes the addition of glutamate to the nucleotide precursor UDP-N-acetylmuramoyl-L-alanine (UMA). This Chlamydia muridarum (strain MoPn / Nigg) protein is UDP-N-acetylmuramoylalanine--D-glutamate ligase.